We begin with the raw amino-acid sequence, 508 residues long: MGLPWYRVHTVVLNDPGRLLSVHIMHTALVSGWAGSMALYELAVFDPSDPVLDPMWRQGMFVIPFMTRLGITNSWGGWSITGGTITNPGIWSYEGVAGAHIVFSGLCFLAAIWHWVYWDLEIFCDERTGKPSLDLPKIFGIHLFLSGVACFGFGAFHVTGLYGPGIWVSDPYGLTGKVQPVNPAWGVEGFDPFVPGGIASHHIAAGTLGILAGLFHLSVRPPQRLYKGLRMGNIETVLSSSIAAVFFAAFVVAGTMWYGSATTPIELFGPTRYQWDQGYFQQEIYRRVGTGLAENQSLSEAWSKIPEKLAFYDYIGNNPAKGGLFRAGSMDNGDGIAVGWLGHPIFRDKEGRELFVRRMPTFFETFPVVLVDGDGIVRADVPFRRAESKYSVEQVGVTVEFYGGELNGVSYSDPATVKKYARRAQLGEIFELDRATLKSDGVFRSSPRGWFTFGHASFALLFFFGHIWHGARTLFRDVFAGIDPDLDAQVEFGAFQKLGDPTTRRQVV.

6 consecutive transmembrane segments (helical) span residues 21–36, 101–115, 140–156, 203–218, 237–252, and 457–472; these read SVHIMHTALVSGWAGS, IVFSGLCFLAAIWHW, GIHLFLSGVACFGFGAF, IAAGTLGILAGLFHLS, VLSSSIAAVFFAAFVV, and SFALLFFFGHIWHGAR.

It belongs to the PsbB/PsbC family. PsbB subfamily. In terms of assembly, PSII is composed of 1 copy each of membrane proteins PsbA, PsbB, PsbC, PsbD, PsbE, PsbF, PsbH, PsbI, PsbJ, PsbK, PsbL, PsbM, PsbT, PsbX, PsbY, PsbZ, Psb30/Ycf12, at least 3 peripheral proteins of the oxygen-evolving complex and a large number of cofactors. It forms dimeric complexes. Binds multiple chlorophylls. PSII binds additional chlorophylls, carotenoids and specific lipids. is required as a cofactor.

The protein localises to the plastid. The protein resides in the chloroplast thylakoid membrane. Functionally, one of the components of the core complex of photosystem II (PSII). It binds chlorophyll and helps catalyze the primary light-induced photochemical processes of PSII. PSII is a light-driven water:plastoquinone oxidoreductase, using light energy to abstract electrons from H(2)O, generating O(2) and a proton gradient subsequently used for ATP formation. The sequence is that of Photosystem II CP47 reaction center protein from Platanus occidentalis (Sycamore).